The primary structure comprises 376 residues: MKFEVIKKDGNARRGILTTAHSVIQTPVFMPVGTVGAVKSLDAFDMSEILDAKIILANTYHMYLRPGSKVVREFGGLHGFSKFDRSFLTDSGGFQAFSLRSNTKNDDGGIKFKSHIDGSTHYFTPRSVLDTQYELGSDIMMILDDLVALPAEPKRIDLSIKRTIKWAKEAIDYHKFMQSKGVGLQQNIFGIVQGGTDYEARKFCAEALNEMPFDGLAIGGLSVGESNEAMYDTVEAVMPFMDELRPRYLMGVGTPEDLVENVERGVDMFDCVMPTRNARNGTLFTSFGKINIKSAKFINDHAPIDPQCQCYTCKRYSRGYLNHLFKARELTFFRLASLHNLHYYLNLMKEMREAIEVGEFAKFKRNFYAKRSTDEL.

Asp90 serves as the catalytic Proton acceptor. Substrate is bound by residues 90-94 (DSGGF), Asp144, Gln193, and Gly220. The tract at residues 251 to 257 (GVGTPED) is RNA binding. Asp270 acts as the Nucleophile in catalysis. An RNA binding; important for wobble base 34 recognition region spans residues 275-279 (TRNAR). Residues Cys308, Cys310, Cys313, and His339 each contribute to the Zn(2+) site.

The protein belongs to the queuine tRNA-ribosyltransferase family. Homodimer. Within each dimer, one monomer is responsible for RNA recognition and catalysis, while the other monomer binds to the replacement base PreQ1. Zn(2+) is required as a cofactor.

The catalysed reaction is 7-aminomethyl-7-carbaguanine + guanosine(34) in tRNA = 7-aminomethyl-7-carbaguanosine(34) in tRNA + guanine. Its pathway is tRNA modification; tRNA-queuosine biosynthesis. Functionally, catalyzes the base-exchange of a guanine (G) residue with the queuine precursor 7-aminomethyl-7-deazaguanine (PreQ1) at position 34 (anticodon wobble position) in tRNAs with GU(N) anticodons (tRNA-Asp, -Asn, -His and -Tyr). Catalysis occurs through a double-displacement mechanism. The nucleophile active site attacks the C1' of nucleotide 34 to detach the guanine base from the RNA, forming a covalent enzyme-RNA intermediate. The proton acceptor active site deprotonates the incoming PreQ1, allowing a nucleophilic attack on the C1' of the ribose to form the product. After dissociation, two additional enzymatic reactions on the tRNA convert PreQ1 to queuine (Q), resulting in the hypermodified nucleoside queuosine (7-(((4,5-cis-dihydroxy-2-cyclopenten-1-yl)amino)methyl)-7-deazaguanosine). The sequence is that of Queuine tRNA-ribosyltransferase from Campylobacter concisus (strain 13826).